We begin with the raw amino-acid sequence, 516 residues long: Cytochrome P450 monooxygenase asR2 (516 aa).

Residues 9 to 29 (LNSITFSLLVFLGFVGVSQLI) traverse the membrane as a helical segment. N-linked (GlcNAc...) asparagine glycosylation is found at Asn-248 and Asn-273. Cys-461 contributes to the heme binding site.

The protein belongs to the cytochrome P450 family. Heme is required as a cofactor.

It is found in the membrane. The protein operates within secondary metabolite biosynthesis; terpenoid biosynthesis. In terms of biological role, cytochrome P450 monooxygenase; part of the gene cluster that mediates the biosynthesis of xenovulene A, an unusual meroterpenoid that has potent inhibitory effects on the human gamma-aminobutyrate A (GABAA) benzodiazepine receptor. The first step of xenovulene A biosynthesis is the biosynthesis of 3-methylorcinaldehyde performed by the non-reducing polyketide synthase aspks1. The salicylate hydroxylase asL1 then catalyzes the oxidative dearomatization of 3-methylorcinaldehyde to yield a dearomatized hydroxycyclohexadione. The 2-oxoglutarate-dependent dioxygenase asL3 further catalyzes the oxidative ring expansion to provide the first tropolone metabolite. The cytochrome P450 monooxygenase asR2 allows the synthesis of tropolone hemiacetal. In parallel, a previously unrecognised class of terpene cyclase, asR6, produces alpha-humulene from farnesylpyrophosphate (FPP). The putative Diels-Alderase asR5 probably catalyzes the formation of the tropolone-humulene skeleton by linking humulene and the polyketide moiety. Oxidative-ring contractions catalyzed by asL4 and asL6 then processively remove carbon atoms from the polyketide to yield xenovulene A. The polypeptide is Cytochrome P450 monooxygenase asR2 (Sarocladium schorii (Acremonium strictum (strain IMI 501407))).